Here is a 326-residue protein sequence, read N- to C-terminus: Tetraacyldisaccharide 4'-kinase (326 aa).

52 to 59 lines the ATP pocket; the sequence is TLGGAGKT.

This sequence belongs to the LpxK family.

It carries out the reaction a lipid A disaccharide + ATP = a lipid IVA + ADP + H(+). It participates in glycolipid biosynthesis; lipid IV(A) biosynthesis; lipid IV(A) from (3R)-3-hydroxytetradecanoyl-[acyl-carrier-protein] and UDP-N-acetyl-alpha-D-glucosamine: step 6/6. In terms of biological role, transfers the gamma-phosphate of ATP to the 4'-position of a tetraacyldisaccharide 1-phosphate intermediate (termed DS-1-P) to form tetraacyldisaccharide 1,4'-bis-phosphate (lipid IVA). The sequence is that of Tetraacyldisaccharide 4'-kinase from Methylobacterium radiotolerans (strain ATCC 27329 / DSM 1819 / JCM 2831 / NBRC 15690 / NCIMB 10815 / 0-1).